The following is a 305-amino-acid chain: MLIRKPADHLPSEITSESVYFNRRQFMAGAAGLLLSAETLAGLAAKKSPLSQLAANDKPNSLKDITSYNNFYEFGTDKSDPAENAHTLRARPWSVLVDGEVAKPRRFSIEELLKFPLEERVYRLRCVEGWSMVIPWVGFPLASLIKQMNPTSRAKYVAFETLQRPSEMPGQRQAVLDWPYREGLRIDEVMHPLAILAVGLYGNALPNQNGAPIRLVVPWKYGFKSIKSIVRIRLQETMPATSWNMANAHEYGFYSNVNPDVDHPRWSQASERRIGEFFKRKTLPFNGYAEQVAGLYRGMDLRKNF.

A signal peptide (tat-type signal) is located at residues M1–A54. Residues N69, Y72–E73, C126, T161, N209, R214, and S225–K227 contribute to the Mo-molybdopterin site.

It belongs to the MsrP family. In terms of assembly, heterodimer of a catalytic subunit (MsrP) and a heme-binding subunit (MsrQ). It depends on Mo-molybdopterin as a cofactor. Post-translationally, predicted to be exported by the Tat system. The position of the signal peptide cleavage has not been experimentally proven.

It is found in the periplasm. It catalyses the reaction L-methionyl-[protein] + a quinone + H2O = L-methionyl-(S)-S-oxide-[protein] + a quinol. The catalysed reaction is L-methionyl-[protein] + a quinone + H2O = L-methionyl-(R)-S-oxide-[protein] + a quinol. In terms of biological role, part of the MsrPQ system that repairs oxidized periplasmic proteins containing methionine sulfoxide residues (Met-O), using respiratory chain electrons. Thus protects these proteins from oxidative-stress damage caused by reactive species of oxygen and chlorine generated by the host defense mechanisms. MsrPQ is essential for the maintenance of envelope integrity under bleach stress, rescuing a wide series of structurally unrelated periplasmic proteins from methionine oxidation. The catalytic subunit MsrP is non-stereospecific, being able to reduce both (R-) and (S-) diastereoisomers of methionine sulfoxide. The protein is Protein-methionine-sulfoxide reductase catalytic subunit MsrP of Chromobacterium violaceum (strain ATCC 12472 / DSM 30191 / JCM 1249 / CCUG 213 / NBRC 12614 / NCIMB 9131 / NCTC 9757 / MK).